We begin with the raw amino-acid sequence, 258 residues long: DNA repair protein RecO (258 aa).

It belongs to the RecO family.

Functionally, involved in DNA repair and RecF pathway recombination. This chain is DNA repair protein RecO, found in Syntrophotalea carbinolica (strain DSM 2380 / NBRC 103641 / GraBd1) (Pelobacter carbinolicus).